The following is a 347-amino-acid chain: uncharacterized protein (347 aa).

This is an uncharacterized protein from Caenorhabditis elegans.